The chain runs to 501 residues: MFDNILEQQRIEKAKELKNLGINPYPHFLEKEMSLKTFKDKFSYILEQVEKRDESVNAVVAGRLKLLRIAGKSIFANIEDEDTNLQIYFNKDSVGEELYAILKKNLEVGDIVLVKGFPFVTKTGEFSLHASEVKLATKAIVPLPEKYHGLTDIEQRYRKRYVDMIMNAEVRKDFLVRSKVVSLIRHFFENKGFLEVETPMMHPIAGGANAKPFVTFHNSLGVERFLRIAPELYLKRLVVGGFEAVFEINRCFRNEGMDLTHNPEFTTIEFYWAYHNYKDLMDLTEELFALLLDKLNLGKTIEFDGKMIDFSKPFERITYKDALCKYGGLDRDLIEDKEKILTKLKVDGFEANEKLELGHLQAELFDNYVEEKLINPTFVIDFPISISPLSRRSDEDSQIAERFELFICGRELANGFNELNDPLDQYERFLKQIEAKNAGDEEACEMDEDFVNALGYGMPPTAGQGIGIDRLVMLLTNKKSIRDVILFPAMRPLKSELKEKE.

Glu404 and Glu411 together coordinate Mg(2+).

The protein belongs to the class-II aminoacyl-tRNA synthetase family. Homodimer. Requires Mg(2+) as cofactor.

The protein localises to the cytoplasm. It catalyses the reaction tRNA(Lys) + L-lysine + ATP = L-lysyl-tRNA(Lys) + AMP + diphosphate. This Campylobacter jejuni subsp. jejuni serotype O:6 (strain 81116 / NCTC 11828) protein is Lysine--tRNA ligase.